The following is a 190-amino-acid chain: Protein GrpE (190 aa).

The tract at residues 1–33 (MSEQEKDQNNAEPQVETVEEQQAAAAAEAVEPT) is disordered. Low complexity predominate over residues 11–32 (AEPQVETVEEQQAAAAAEAVEP).

This sequence belongs to the GrpE family. Homodimer.

The protein localises to the cytoplasm. In terms of biological role, participates actively in the response to hyperosmotic and heat shock by preventing the aggregation of stress-denatured proteins, in association with DnaK and GrpE. It is the nucleotide exchange factor for DnaK and may function as a thermosensor. Unfolded proteins bind initially to DnaJ; upon interaction with the DnaJ-bound protein, DnaK hydrolyzes its bound ATP, resulting in the formation of a stable complex. GrpE releases ADP from DnaK; ATP binding to DnaK triggers the release of the substrate protein, thus completing the reaction cycle. Several rounds of ATP-dependent interactions between DnaJ, DnaK and GrpE are required for fully efficient folding. The protein is Protein GrpE of Alcanivorax borkumensis (strain ATCC 700651 / DSM 11573 / NCIMB 13689 / SK2).